The primary structure comprises 539 residues: Zinc finger and BTB domain-containing protein 7B (539 aa).

Residues 34 to 115 form the BTB domain; the sequence is CDLTIRTQGL…AYTATLTTSS (82 aa). Ser150 is subject to Phosphoserine. The tract at residues 171–308 is disordered; sequence ASGVPNGEDS…SPEELGSDED (138 aa). Over residues 182 to 196 the composition is skewed to pro residues; the sequence is PQVPLPPPPPPPPRP. The segment covering 197–206 has biased composition (basic residues); it reads VARRSRKPRK. An N6-acetyllysine; by EP300; alternate mark is found at Lys206 and Lys212. Residues Lys206 and Lys212 each participate in a glycyl lysine isopeptide (Lys-Gly) (interchain with G-Cter in ubiquitin); alternate cross-link. Positions 273–282 are enriched in acidic residues; sequence YEGEEEEEEL. Lys335 carries the post-translational modification N6-acetyllysine; by EP300; alternate. Lys335 participates in a covalent cross-link: Glycyl lysine isopeptide (Lys-Gly) (interchain with G-Cter in ubiquitin); alternate. A required for interaction with and acetylation by EP300 region spans residues 344-400; that stretch reads MPQECPVCHKIIHGAGKLPRHMRTHTGEKPFACEVCGVRFTRNDKLKIHMRKHTGER. A C2H2-type 1 zinc finger spans residues 346 to 368; the sequence is QECPVCHKIIHGAGKLPRHMRTH. Thr369 carries the post-translational modification Phosphothreonine. 2 C2H2-type zinc fingers span residues 374–396 and 402–424; these read FACE…MRKH and YSCP…MHLH. The C2H2-type 4; atypical zinc finger occupies 430–454; sequence YECHLCHKAFAKEDHLQRHLKGQNC. 2 disordered regions span residues 458–486 and 501–539; these read RTRR…GLDL and FWEQ…MESS. The segment covering 508–517 has biased composition (pro residues); the sequence is TGPPVSTPGP.

In terms of assembly, homodimerizes. Interacts with NCL, NEDD4 and YBX1. Interacts with HNRNPU (via RNA-binding RGG-box region); the interaction facilitates the recruitment of long non-coding RNA Blnc1 by ZBTB7B. Interacts with HDAC4 and HDAC5; the interaction allows the recruitment of HDAC4 and HDAC5 on CD8 loci for deacetylation and possible inhibition of CD8 genes expression. In terms of processing, acetylated directly and specifically by EP300. EP300-mediated acetylation of Lys-206, Lys-212 and Lys-335 stabilizes the protein by antagonizing ubiquitin conjugation. Post-translationally, ubiquitinated, leading to proteasomal degradation. Competes with acetylation on Lys-206, Lys-212 and Lys-335.

It is found in the nucleus. Transcription regulator that acts as a key regulator of lineage commitment of immature T-cell precursors. Exerts distinct biological functions in the mammary epithelial cells and T cells in a tissue-specific manner. Necessary and sufficient for commitment of CD4 lineage, while its absence causes CD8 commitment. Development of immature T-cell precursors (thymocytes) to either the CD4 helper or CD8 killer T-cell lineages correlates precisely with their T-cell receptor specificity for major histocompatibility complex class II or class I molecules, respectively. Cross-antagonism between ZBTB7B and CBF complexes are determinative to CD4 versus CD8 cell fate decision. Suppresses RUNX3 expression and imposes CD4+ lineage fate by inducing the SOCS suppressors of cytokine signaling. induces, as a transcriptional activator, SOCS genes expression which represses RUNX3 expression and promotes the CD4+ lineage fate. During CD4 lineage commitment, associates with multiple sites at the CD8 locus, acting as a negative regulator of the CD8 promoter and enhancers by epigenetic silencing through the recruitment of class II histone deacetylases, such as HDAC4 and HDAC5, to these loci. Regulates the development of IL17-producing CD1d-restricted naural killer (NK) T cells. Also functions as an important metabolic regulator in the lactating mammary glands. Critical feed-forward regulator of insulin signaling in mammary gland lactation, directly regulates expression of insulin receptor substrate-1 (IRS-1) and insulin-induced Akt-mTOR-SREBP signaling. Transcriptional repressor of the collagen COL1A1 and COL1A2 genes. May also function as a repressor of fibronectin and possibly other extracellular matrix genes. Potent driver of brown fat development, thermogenesis and cold-induced beige fat formation. Recruits the brown fat lncRNA 1 (Blnc1):HNRNPU ribonucleoprotein complex to activate thermogenic gene expression in brown and beige adipocytes. This is Zinc finger and BTB domain-containing protein 7B from Homo sapiens (Human).